The chain runs to 256 residues: 3-isopropylmalate dehydratase small subunit 2 (256 aa).

The transit peptide at 1 to 59 directs the protein to the chloroplast; the sequence is MAYSLPTFPQALPCSSTKTSSSLATFRSPFLRFNGSTSLIPSSISITSRGTSSPTIIPR.

This sequence belongs to the LeuD family. Heterodimer of the large LEUC/IIL1 subunit and the small LEUD (SSU1, SSU2 or SSU3) subunits. Expressed in vascular bundles of roots, cotyledons and rosette leaves. Expressed in stem vascular bundles which branche off into lateral inflorescences. Expressed in connective tissues in anthers. In young seedlings, expressed in cotyledon epidermal cells and vasculare bundles. In hypocotyls, expressed in parenchyma cells surrounding the vasculature and further peripheral cells. In seedling roots, expressed in cells along the vasculature. In roots of adult plants, expressed in cells closely associated with the stele. In flowering stalks, expressed in parenchyma cells associated with the phloem or the xylem. Expressed in the vasculature of sepals and petals.

Its subcellular location is the plastid. It localises to the chloroplast stroma. It catalyses the reaction (2R,3S)-3-isopropylmalate = (2S)-2-isopropylmalate. The catalysed reaction is a 2-(omega-methylsulfanyl)alkylmalate = a 2-(omega-methylsulfanyl)alkylmaleate + H2O. It carries out the reaction 2-(3-methylsulfanyl)propylmalate = 2-(2-methylsulfanyl)propylmaleate + H2O. The enzyme catalyses a 3-(omega-methylsulfanyl)alkylmalate = a 2-(omega-methylsulfanyl)alkylmaleate + H2O. It catalyses the reaction 2-(2-methylsulfanyl)ethylmalate = 2-(2-methylsulfanyl)ethylmaleate + H2O. The catalysed reaction is 3-(2-methylsulfanyl)ethylmalate = 2-(2-methylsulfanyl)ethylmaleate + H2O. It carries out the reaction 3-(3-methylsulfanyl)propylmalate = 2-(2-methylsulfanyl)propylmaleate + H2O. Its pathway is amino-acid biosynthesis; L-leucine biosynthesis; L-leucine from 3-methyl-2-oxobutanoate: step 2/4. Functionally, catalyzes the isomerization between 2-isopropylmalate and 3-isopropylmalate, via the formation of 2-isopropylmaleate. Functions redundantly with LEUD2 in the methionine chain elongation pathway of aliphatic glucosinolate formation. The protein is 3-isopropylmalate dehydratase small subunit 2 of Arabidopsis thaliana (Mouse-ear cress).